The following is a 338-amino-acid chain: Lumican (338 aa).

Residues 1–18 (MNVCTFTLVLALVGSVSG) form the signal peptide. Q19 bears the Pyrrolidone carboxylic acid mark. Residues Y20, Y21, Y23, and Y30 each carry the sulfotyrosine modification. The 39-residue stretch at 28-66 (FMYGELSPNCAPECNCPHSYPTAMYCDDLKLKSVPMVPP) folds into the LRRNT domain. LRR repeat units lie at residues 67–88 (GIKY…AFEN), 91–114 (DLQW…VFSK), 117–137 (QLKK…PLPK), 138–159 (SLQD…DGLV), 160–181 (NLTF…ASLK), 185–205 (SLEY…GLPT), 206–227 (SLLT…YFNR), and 230–250 (GLQY…PGNS). N-linked (GlcNAc...) (keratan sulfate) asparagine glycosylation occurs at N88. An N-linked (GlcNAc...) (keratan sulfate) asparagine glycan is attached at N127. N160 is a glycosylation site (N-linked (GlcNAc...) (keratan sulfate) asparagine). A glycan (N-linked (GlcNAc...) (keratan sulfate) asparagine) is linked at N252. LRR repeat units follow at residues 255 to 276 (SLLE…NENL) and 277 to 296 (ENYY…SFCK). A disulfide bridge links C295 with C328. Phosphoserine is present on S304. An LRR 11 repeat occupies 305–326 (KIKHLRLDGNPLTQSSLPPDMY).

The protein belongs to the small leucine-rich proteoglycan (SLRP) family. SLRP class II subfamily. Binds to laminin. In terms of processing, contains keratan sulfate.

It is found in the secreted. Its subcellular location is the extracellular space. It localises to the extracellular matrix. This Rattus norvegicus (Rat) protein is Lumican (Lum).